We begin with the raw amino-acid sequence, 273 residues long: Glutamate racemase (273 aa).

Residues 9-10 (DS) and 41-42 (YG) each bind substrate. Cys73 acts as the Proton donor/acceptor in catalysis. 74-75 (NT) contacts substrate. The active-site Proton donor/acceptor is Cys183. Position 184–185 (184–185 (TH)) interacts with substrate.

This sequence belongs to the aspartate/glutamate racemases family.

It carries out the reaction L-glutamate = D-glutamate. Its pathway is cell wall biogenesis; peptidoglycan biosynthesis. Provides the (R)-glutamate required for cell wall biosynthesis. The sequence is that of Glutamate racemase from Shewanella oneidensis (strain ATCC 700550 / JCM 31522 / CIP 106686 / LMG 19005 / NCIMB 14063 / MR-1).